The primary structure comprises 349 residues: ATPase GET3 (349 aa).

Residue 26–33 (KGGVGKTT) coordinates ATP. The active site involves Asp57. ATP-binding residues include Glu242 and Asn269. Zn(2+) contacts are provided by Cys281 and Cys284.

It belongs to the arsA ATPase family. Homodimer. Component of the Golgi to ER traffic (GET) complex, which is composed of GET1, GET2 and GET3. Within the complex, GET1 and GET2 form a heterotetramer which is stabilized by phosphatidylinositol binding and which binds to the GET3 homodimer. Interacts with the chloride channel protein GEF1.

Its subcellular location is the cytoplasm. It localises to the endoplasmic reticulum. The protein resides in the golgi apparatus. Its function is as follows. ATPase required for the post-translational delivery of tail-anchored (TA) proteins to the endoplasmic reticulum. Recognizes and selectively binds the transmembrane domain of TA proteins in the cytosol. This complex then targets to the endoplasmic reticulum by membrane-bound receptors GET1 and GET2, where the tail-anchored protein is released for insertion. This process is regulated by ATP binding and hydrolysis. ATP binding drives the homodimer towards the closed dimer state, facilitating recognition of newly synthesized TA membrane proteins. ATP hydrolysis is required for insertion. Subsequently, the homodimer reverts towards the open dimer state, lowering its affinity for the GET1-GET2 receptor, and returning it to the cytosol to initiate a new round of targeting. Cooperates with the HDEL receptor ERD2 to mediate the ATP-dependent retrieval of resident ER proteins that contain a C-terminal H-D-E-L retention signal from the Golgi to the ER. Involved in low-level resistance to the oxyanions arsenite and arsenate, and in heat tolerance. The polypeptide is ATPase GET3 (Candida tropicalis (strain ATCC MYA-3404 / T1) (Yeast)).